We begin with the raw amino-acid sequence, 147 residues long: D-aminoacyl-tRNA deacylase (147 aa).

Positions 136–137 match the Gly-cisPro motif, important for rejection of L-amino acids motif; the sequence is GP.

This sequence belongs to the DTD family. As to quaternary structure, homodimer.

It is found in the cytoplasm. The catalysed reaction is glycyl-tRNA(Ala) + H2O = tRNA(Ala) + glycine + H(+). The enzyme catalyses a D-aminoacyl-tRNA + H2O = a tRNA + a D-alpha-amino acid + H(+). An aminoacyl-tRNA editing enzyme that deacylates mischarged D-aminoacyl-tRNAs. Also deacylates mischarged glycyl-tRNA(Ala), protecting cells against glycine mischarging by AlaRS. Acts via tRNA-based rather than protein-based catalysis; rejects L-amino acids rather than detecting D-amino acids in the active site. By recycling D-aminoacyl-tRNA to D-amino acids and free tRNA molecules, this enzyme counteracts the toxicity associated with the formation of D-aminoacyl-tRNA entities in vivo and helps enforce protein L-homochirality. The chain is D-aminoacyl-tRNA deacylase from Sulfurihydrogenibium sp. (strain YO3AOP1).